The chain runs to 1209 residues: Putative lysine-specific demethylase JMJ16 (1209 aa).

A JmjN domain is found at 146–187 (APVFYPSEEEFEDTLNYIAKIRPEAEKYGICRIVPPPSWKPP). The short motif at 217-224 (MKKISKLP) is the Nuclear localization signal element. Positions 361–527 (KYAKSGWNLN…HGQIAIELYC (167 aa)) constitute a JmjC domain. Positions 407, 409, and 495 each coordinate Fe cation. Cys-617, Cys-620, Cys-631, Cys-633, Cys-640, His-643, Cys-648, and Cys-650 together coordinate Zn(2+). The C5HC2 zinc finger occupies 617 to 667 (CCICFFDLHLSAAGCRCSPEKYSCLTHVKELCSCPWVTKYFLFRYDIDELN). Residues 872 to 900 (DTRNTISLPTNDQKTMRRDVPSSTSHAEV) form a disordered region. Over residues 875–884 (NTISLPTNDQ) the composition is skewed to polar residues. One can recognise an FYR N-terminal domain in the interval 974–1032 (VVRRINCNVEPLSYGCVLSGKSWCSRRAIFPKGFRSRVKYINILDPTNMCFYISEILDA). Positions 1034-1124 (RNSPLFMVYL…RVCTDYWDSR (91 aa)) constitute an FYR C-terminal domain.

The protein belongs to the JARID1 histone demethylase family. As to quaternary structure, interacts with MMD1 in the nucleus of male meiocytes, especially on pachytene chromosomes. Requires Fe(2+) as cofactor. Confined to inflorescences.

Its subcellular location is the nucleus. The enzyme catalyses N(6),N(6),N(6)-trimethyl-L-lysyl(4)-[histone H3] + 2-oxoglutarate + O2 = N(6),N(6)-dimethyl-L-lysyl(4)-[histone H3] + formaldehyde + succinate + CO2. It catalyses the reaction N(6),N(6)-dimethyl-L-lysyl(4)-[histone H3] + 2-oxoglutarate + O2 = N(6)-methyl-L-lysyl(4)-[histone H3] + formaldehyde + succinate + CO2. The catalysed reaction is N(6)-methyl-L-lysyl(4)-[histone H3] + 2-oxoglutarate + O2 = L-lysyl(4)-[histone H3] + formaldehyde + succinate + CO2. Functions as a histone H3 'Lys-4' (H3K4me) demethylase involved in the negative regulation of gene expression. Active on H3K4me1, H3K4me2 and H3K4me3. Not active on mono-, di- and trimethylated H3K9, H3K27 and H3K36 in somatic cells. However, also active on H3K9 when in complex with MMD1, a meiocyte-specific histone reader. Together with MMD1, promotes gene expression in male meiocytes in an H3K9me3-dependent manner, and contributes to meiotic chromosome condensation by triggering some condensin promoters (e.g. CAP-D3 and CAP-H). Together with JMJ14 and JMJ17, required for plant growth and development. Represses leaf senescence in an age-dependent manner by demethylating H3K4me3 activating histone marks at senescence-associated genes (SAGs) loci, including WRKY53 and SAG201, thus preventing their premature expression. This chain is Putative lysine-specific demethylase JMJ16, found in Arabidopsis thaliana (Mouse-ear cress).